The chain runs to 192 residues: Thymidylate kinase (192 aa).

7-14 (GVDGVGKS) lines the ATP pocket.

It belongs to the thymidylate kinase family.

It carries out the reaction dTMP + ATP = dTDP + ADP. In terms of biological role, phosphorylation of dTMP to form dTDP in both de novo and salvage pathways of dTTP synthesis. The polypeptide is Thymidylate kinase (Campylobacter fetus subsp. fetus (strain 82-40)).